A 179-amino-acid polypeptide reads, in one-letter code: MAKLHDYYKDEVVNKLMTEFNYNSVMQVPRVEKITLNMGVGEAIADKKLLDNAAADLTAISGQKPLITKARKSVAGFKIRQGYPIGCKVTLRGERMWEFFERLITIAVPRIRDFRGLSAKSFDGRGNYSMGVREQIIFPEIDYDKVDRVRGLDITITTTAKSDEEGRALLAAFDFPFRK.

This sequence belongs to the universal ribosomal protein uL5 family. As to quaternary structure, part of the 50S ribosomal subunit; part of the 5S rRNA/L5/L18/L25 subcomplex. Contacts the 5S rRNA and the P site tRNA. Forms a bridge to the 30S subunit in the 70S ribosome.

This is one of the proteins that bind and probably mediate the attachment of the 5S RNA into the large ribosomal subunit, where it forms part of the central protuberance. In the 70S ribosome it contacts protein S13 of the 30S subunit (bridge B1b), connecting the 2 subunits; this bridge is implicated in subunit movement. Contacts the P site tRNA; the 5S rRNA and some of its associated proteins might help stabilize positioning of ribosome-bound tRNAs. The protein is Large ribosomal subunit protein uL5 of Salmonella agona (strain SL483).